The following is a 309-amino-acid chain: Putative G-protein coupled receptor B0244.4 (309 aa).

Helical transmembrane passes span 39–59, 82–102, 114–134, 162–182, 204–224, and 256–276; these read SIIF…ACFL, YIFM…MLAL, IYFL…GSYV, FAIA…MFQA, IMLV…SFVL, and WTLF…FYLV.

The protein belongs to the G-protein coupled receptor 1 family. B0244 subfamily.

It is found in the cell membrane. The sequence is that of Putative G-protein coupled receptor B0244.4 from Caenorhabditis elegans.